We begin with the raw amino-acid sequence, 402 residues long: MNGKSSVLDSAPEYVDKKKYFWILSTFWPATPMIGIWLANETGWGIFYGLVLAVWYGVLPLLDAMFGEDFNNPPEEVVEKLEKERYYRVLTYLTVPMHYAALIVSAWWVGTQSMSWFEIVALALSLGIVNGLALNTGHELGHKKEAFDRWMAKIVLAVVGYGHFFIEHNKGHHRDVATPMDPATSRMGENIYKFSTREIPGAFRRAWGLEEQRLSRRGQSVWSFDNEILQPMVITVVLYTLLLAFFGPKMLVFLPIQMAFGWWQLTSANYIEHYGLLREKMADGRYEHQKPHHSWNSNHIVSNLVLFHLQRHSDHHAHPTRSYQSLRDFPGLPALPTGYPGAFLMAMIPQWFRSVMDPKVVNWANGDLSKIQIEDSMRAEYIKKFTHNVGADDKRGATAVAS.

A run of 4 helical transmembrane segments spans residues 20 to 40 (YFWI…WLAN), 42 to 62 (TGWG…LPLL), 89 to 109 (VLTY…AWWV), and 114 to 134 (MSWF…GLAL). 2 residues coordinate Fe cation: His-138 and His-142. The chain crosses the membrane as a helical span at residues 146 to 166 (AFDRWMAKIVLAVVGYGHFFI). Residues His-168, His-172, and His-173 each contribute to the Fe cation site. A helical membrane pass occupies residues 236–256 (VVLYTLLLAFFGPKMLVFLPI). Positions 312, 315, and 316 each coordinate Fe cation.

It belongs to the fatty acid desaturase type 1 family. AlkB subfamily. Fe(3+) serves as cofactor.

Its subcellular location is the cell inner membrane. The catalysed reaction is octane + 2 reduced [rubredoxin] + O2 + 2 H(+) = 2 oxidized [rubredoxin] + octan-1-ol + H2O. Its pathway is hydrocarbon metabolism; alkane degradation. Catalyzes the hydroxylation of n-alkanes in the presence of a NADH-rubredoxin reductase and rubredoxin. This is Alkane 1-monooxygenase (alkB) from Pseudomonas putida (Arthrobacter siderocapsulatus).